The chain runs to 30 residues: Cyclotide hyen-E (30 aa).

The cyclopeptide (Gly-Asn) cross-link spans 1 to 30 (GVPCGESCVYIPCFTGIINCSCRDKVCYNN). 3 disulfides stabilise this stretch: Cys-4–Cys-20, Cys-8–Cys-22, and Cys-13–Cys-27.

This is a cyclic peptide. As to expression, detected in stems (at protein level).

In terms of biological role, probably participates in a plant defense mechanism. Has cytotoxic activity against HUVEC cells (LC(50)= 2.17 uM) and various cancer cells including HeLa (LC(50)= 3.05 uM), MCF-7 and K562. Displays very weak hemolytic activity. Binds to and induces leakage in phospholipd membranes, particularly ones containing 1-palmitoyl-2-oleophosphatidylethanolamine (POPE). This chain is Cyclotide hyen-E, found in Pigea enneasperma (Spade flower).